We begin with the raw amino-acid sequence, 209 residues long: uncharacterized protein (209 aa).

An N-terminal signal peptide occupies residues 1 to 19 (MGYFPYLAVFVCLLASGDA). N-linked (GlcNAc...) asparagine glycans are attached at residues Asn-41 and Asn-109.

Component of the acid-soluble organic matrix of prismatic shell layers (at protein level).

It is found in the secreted. This is an uncharacterized protein from Haliotis asinina (Donkey's ear abalone).